Consider the following 116-residue polypeptide: Protein Rev (116 aa).

Residues Ser-5 and Ser-8 each carry the phosphoserine; by host CK2 modification. The interval 18 to 26 is homomultimerization; that stretch reads LIKLLYQSN. The tract at residues 21–49 is disordered; that stretch reads LLYQSNPPPNPEGTRQARRNRRRRWRERQ. The Nuclear localization signal and RNA-binding (RRE) signature appears at 34–50; that stretch reads TRQARRNRRRRWRERQR. Residues 36 to 47 show a composition bias toward basic residues; that stretch reads QARRNRRRRWRE. Positions 73–84 match the Nuclear export signal and binding to XPO1 motif; it reads LQLPPLERLTLD. Phosphoserine; by host occurs at positions 92 and 99. The tract at residues 92–116 is disordered; the sequence is SGTQGVGSPQILVESPTVLESGTKE.

It belongs to the HIV-1 REV protein family. Homomultimer; when bound to the RRE. Multimeric assembly is essential for activity and may involve XPO1. Binds to human KPNB1, XPO1, TNPO1, RANBP5 and IPO7. Interacts with the viral Integrase. Interacts with human KHDRBS1. Interacts with human NAP1; this interaction decreases Rev multimerization and stimulates its activity. Interacts with human DEAD-box helicases DDX3 and DDX24; these interactions may serve for viral RNA export to the cytoplasm and packaging, respectively. Interacts with human PSIP1; this interaction may inhibit HIV-1 DNA integration by promoting dissociation of the Integrase-LEDGF/p75 complex. Post-translationally, asymmetrically arginine dimethylated at one site by host PRMT6. Methylation impairs the RNA-binding activity and export of viral RNA from the nucleus to the cytoplasm. Phosphorylated by protein kinase CK2. Presence of, and maybe binding to the N-terminus of the regulatory beta subunit of CK2 is necessary for CK2-mediated Rev's phosphorylation.

The protein localises to the host nucleus. It is found in the host nucleolus. The protein resides in the host cytoplasm. Functionally, escorts unspliced or incompletely spliced viral pre-mRNAs (late transcripts) out of the nucleus of infected cells. These pre-mRNAs carry a recognition sequence called Rev responsive element (RRE) located in the env gene, that is not present in fully spliced viral mRNAs (early transcripts). This function is essential since most viral proteins are translated from unspliced or partially spliced pre-mRNAs which cannot exit the nucleus by the pathway used by fully processed cellular mRNAs. Rev itself is translated from a fully spliced mRNA that readily exits the nucleus. Rev's nuclear localization signal (NLS) binds directly to KPNB1/Importin beta-1 without previous binding to KPNA1/Importin alpha-1. KPNB1 binds to the GDP bound form of RAN (Ran-GDP) and targets Rev to the nucleus. In the nucleus, the conversion from Ran-GDP to Ran-GTP dissociates Rev from KPNB1 and allows Rev's binding to the RRE in viral pre-mRNAs. Rev multimerization on the RRE via cooperative assembly exposes its nuclear export signal (NES) to the surface. Rev can then form a complex with XPO1/CRM1 and Ran-GTP, leading to nuclear export of the complex. Conversion from Ran-GTP to Ran-GDP mediates dissociation of the Rev/RRE/XPO1/RAN complex, so that Rev can return to the nucleus for a subsequent round of export. Beside KPNB1, also seems to interact with TNPO1/Transportin-1, RANBP5/IPO5 and IPO7/RANBP7 for nuclear import. The nucleoporin-like HRB/RIP is an essential cofactor that probably indirectly interacts with Rev to release HIV RNAs from the perinuclear region to the cytoplasm. The protein is Protein Rev of Homo sapiens (Human).